The sequence spans 520 residues: Transactivator/viroplasmin protein (520 aa).

Disordered regions lie at residues glycine 32–alanine 51 and glutamine 487–aspartate 520. The span at serine 40–alanine 51 shows a compositional bias: basic and acidic residues.

The protein belongs to the caulimoviridae viroplasmin family.

It is found in the host cytoplasm. In terms of biological role, enhances the ribosomal termination-reinitiation event leading to the translation of major open reading frames on the polycistronic viral RNAs. In Arabidopsis thaliana (Mouse-ear cress), this protein is Transactivator/viroplasmin protein.